The following is a 125-amino-acid chain: Large ribosomal subunit protein bL12 (125 aa).

It belongs to the bacterial ribosomal protein bL12 family. In terms of assembly, homodimer. Part of the ribosomal stalk of the 50S ribosomal subunit. Forms a multimeric L10(L12)X complex, where L10 forms an elongated spine to which 2 to 4 L12 dimers bind in a sequential fashion. Binds GTP-bound translation factors.

Its function is as follows. Forms part of the ribosomal stalk which helps the ribosome interact with GTP-bound translation factors. Is thus essential for accurate translation. The polypeptide is Large ribosomal subunit protein bL12 (Rickettsia felis (strain ATCC VR-1525 / URRWXCal2) (Rickettsia azadi)).